The chain runs to 230 residues: Thymidylate kinase (230 aa).

Residue 20–27 (GGEGSGKS) coordinates ATP.

It belongs to the thymidylate kinase family.

The enzyme catalyses dTMP + ATP = dTDP + ADP. Phosphorylation of dTMP to form dTDP in both de novo and salvage pathways of dTTP synthesis. This chain is Thymidylate kinase, found in Nitrobacter winogradskyi (strain ATCC 25391 / DSM 10237 / CIP 104748 / NCIMB 11846 / Nb-255).